Reading from the N-terminus, the 157-residue chain is Dihydrofolate reductase type 1 (157 aa).

In terms of domain architecture, DHFR spans 2–156 (KLSLMVAISK…INYSYQIWQK (155 aa)).

Belongs to the dihydrofolate reductase family. In terms of assembly, homodimer.

It carries out the reaction (6S)-5,6,7,8-tetrahydrofolate + NADP(+) = 7,8-dihydrofolate + NADPH + H(+). It functions in the pathway cofactor biosynthesis; tetrahydrofolate biosynthesis; 5,6,7,8-tetrahydrofolate from 7,8-dihydrofolate: step 1/1. In terms of biological role, key enzyme in folate metabolism. Catalyzes an essential reaction for de novo glycine and purine synthesis, and for DNA precursor synthesis. This chain is Dihydrofolate reductase type 1 (dhfrI), found in Escherichia coli.